Here is an 84-residue protein sequence, read N- to C-terminus: Large ribosomal subunit protein uL23 (84 aa).

This sequence belongs to the universal ribosomal protein uL23 family. Part of the 50S ribosomal subunit. Contacts protein L29.

Its function is as follows. Binds to 23S rRNA. One of the proteins that surrounds the polypeptide exit tunnel on the outside of the ribosome. The sequence is that of Large ribosomal subunit protein uL23 from Haloquadratum walsbyi (strain DSM 16790 / HBSQ001).